Reading from the N-terminus, the 416-residue chain is UPF0761 membrane protein Mpe_A1422 (416 aa).

6 helical membrane-spanning segments follow: residues 63 to 83, 120 to 140, 159 to 179, 198 to 218, 234 to 256, and 271 to 291; these read IALVPLATVTLAIFSAFPMFG, LGTVGLVVLVLTALALMLTID, VLVYWAAATLGPLLLGVSLTL, LSVLLNALEFGLLAAAMAGLF, GGLFVSAGFELAKKGLAWYLAQV, and IFLIWLYLGWVIVLLGAVIAA.

Belongs to the UPF0761 family.

It is found in the cell inner membrane. In Methylibium petroleiphilum (strain ATCC BAA-1232 / LMG 22953 / PM1), this protein is UPF0761 membrane protein Mpe_A1422.